The following is a 103-amino-acid chain: uncharacterized protein (103 aa).

This is an uncharacterized protein from Mycoplasma pneumoniae (strain ATCC 29342 / M129 / Subtype 1) (Mycoplasmoides pneumoniae).